A 164-amino-acid chain; its full sequence is Ubiquitin-fold modifier-conjugating enzyme 1 (164 aa).

Cysteine 116 serves as the catalytic Glycyl thioester intermediate.

The protein belongs to the ubiquitin-conjugating enzyme family. UFC1 subfamily.

Its function is as follows. E2-like enzyme which forms an intermediate with UFM1 via a thioester linkage. This chain is Ubiquitin-fold modifier-conjugating enzyme 1, found in Drosophila erecta (Fruit fly).